We begin with the raw amino-acid sequence, 164 residues long: uncharacterized protein (164 aa).

The chain crosses the membrane as a helical span at residues 46 to 66 (FIRPNIYLIIFIIIVLLLLYY). Residues 72 to 137 (KADKEKEKLE…YNLNKENLRE (66 aa)) are a coiled coil. The segment covering 76-91 (EKEKLEDTDKEFDKST) has biased composition (basic and acidic residues). The disordered stretch occupies residues 76-114 (EKEKLEDTDKEFDKSTNNDTNSKKIYHRQKNSKTLNSSK).

It localises to the membrane. This is an uncharacterized protein from Acanthamoeba polyphaga mimivirus (APMV).